Consider the following 608-residue polypeptide: UvrABC system protein C (608 aa).

The 79-residue stretch at 16-94 (NRPGVYRMFD…IKEWRPPYNI (79 aa)) folds into the GIY-YIG domain. The region spanning 204 to 239 (NALADELNTGMEQAAMRLDFEKAAELRDQVAILRRV) is the UVR domain.

The protein belongs to the UvrC family. Interacts with UvrB in an incision complex.

Its subcellular location is the cytoplasm. Functionally, the UvrABC repair system catalyzes the recognition and processing of DNA lesions. UvrC both incises the 5' and 3' sides of the lesion. The N-terminal half is responsible for the 3' incision and the C-terminal half is responsible for the 5' incision. The sequence is that of UvrABC system protein C from Pseudomonas paraeruginosa (strain DSM 24068 / PA7) (Pseudomonas aeruginosa (strain PA7)).